We begin with the raw amino-acid sequence, 461 residues long: UDP-N-acetylmuramoylalanine--D-glutamate ligase (461 aa).

117–123 (GTNGKTT) provides a ligand contact to ATP.

Belongs to the MurCDEF family.

It localises to the cytoplasm. It catalyses the reaction UDP-N-acetyl-alpha-D-muramoyl-L-alanine + D-glutamate + ATP = UDP-N-acetyl-alpha-D-muramoyl-L-alanyl-D-glutamate + ADP + phosphate + H(+). Its pathway is cell wall biogenesis; peptidoglycan biosynthesis. Cell wall formation. Catalyzes the addition of glutamate to the nucleotide precursor UDP-N-acetylmuramoyl-L-alanine (UMA). In Synechococcus sp. (strain CC9605), this protein is UDP-N-acetylmuramoylalanine--D-glutamate ligase.